The chain runs to 207 residues: Probable GTP-binding protein EngB (207 aa).

The EngB-type G domain maps to 22 to 194 (DLPEIAFAGR…WRRIEEVLPA (173 aa)). GTP is bound by residues 30 to 37 (GRSNVGKS), 57 to 61 (GRTQL), 75 to 78 (DLPG), 142 to 145 (TKCD), and 173 to 175 (FSA). Residues Ser37 and Thr59 each coordinate Mg(2+).

It belongs to the TRAFAC class TrmE-Era-EngA-EngB-Septin-like GTPase superfamily. EngB GTPase family. Mg(2+) serves as cofactor.

Necessary for normal cell division and for the maintenance of normal septation. This Geotalea daltonii (strain DSM 22248 / JCM 15807 / FRC-32) (Geobacter daltonii) protein is Probable GTP-binding protein EngB.